The chain runs to 405 residues: 8-amino-7-oxononanoate synthase (405 aa).

Position 23 (arginine 23) interacts with substrate. Glycine 114–tyrosine 115 serves as a coordination point for pyridoxal 5'-phosphate. Histidine 139 is a binding site for substrate. Positions 185, 213, and 245 each coordinate pyridoxal 5'-phosphate. Lysine 248 carries the N6-(pyridoxal phosphate)lysine modification. A substrate-binding site is contributed by threonine 366.

This sequence belongs to the class-II pyridoxal-phosphate-dependent aminotransferase family. BioF subfamily. Homodimer. Pyridoxal 5'-phosphate serves as cofactor.

The catalysed reaction is 6-carboxyhexanoyl-[ACP] + L-alanine + H(+) = (8S)-8-amino-7-oxononanoate + holo-[ACP] + CO2. Its pathway is cofactor biosynthesis; biotin biosynthesis. Functionally, catalyzes the decarboxylative condensation of pimeloyl-[acyl-carrier protein] and L-alanine to produce 8-amino-7-oxononanoate (AON), [acyl-carrier protein], and carbon dioxide. In Delftia acidovorans (strain DSM 14801 / SPH-1), this protein is 8-amino-7-oxononanoate synthase.